The chain runs to 446 residues: Adenylosuccinate synthetase (446 aa).

GTP is bound by residues 12-18 (GDEGKGK) and 40-42 (GHT). Asp13 serves as the catalytic Proton acceptor. Mg(2+) contacts are provided by Asp13 and Gly40. IMP-binding positions include 13 to 16 (DEGK), 38 to 41 (NAGH), Thr128, Arg142, Gln223, Thr238, and Arg302. Residue His41 is the Proton donor of the active site. 298-304 (TTTGRRR) is a substrate binding site. GTP is bound by residues Arg304, 330-332 (KLD), and 412-414 (SLG).

The protein belongs to the adenylosuccinate synthetase family. As to quaternary structure, homodimer. The cofactor is Mg(2+).

The protein localises to the cytoplasm. The enzyme catalyses IMP + L-aspartate + GTP = N(6)-(1,2-dicarboxyethyl)-AMP + GDP + phosphate + 2 H(+). The protein operates within purine metabolism; AMP biosynthesis via de novo pathway; AMP from IMP: step 1/2. Its function is as follows. Plays an important role in the de novo pathway of purine nucleotide biosynthesis. Catalyzes the first committed step in the biosynthesis of AMP from IMP. This is Adenylosuccinate synthetase from Acaryochloris marina (strain MBIC 11017).